The following is a 247-amino-acid chain: Complement C1q subcomponent subunit B (247 aa).

The signal sequence occupies residues 1 to 22; it reads MKTPRGSVLVLLLLNLLRVSWA. A Pyrrolidone carboxylic acid modification is found at glutamine 23. 4-hydroxyproline is present on residues proline 29, proline 32, proline 35, proline 47, and proline 50. The segment at 30–78 is disordered; sequence SIPGIPGIPGKPGSDGKPGTPGTKGEKGLPGLVSHLNENGEKGDPGFPG. The Collagen-like domain maps to 39–98; the sequence is GKPGSDGKPGTPGTKGEKGLPGLVSHLNENGEKGDPGFPGMPGKVGPKGPIGPKGVPGPP. Positions 40 to 52 are enriched in low complexity; that stretch reads KPGSDGKPGTPGT. 5-hydroxylysine is present on residues lysine 53 and lysine 56. Proline 59 bears the 4-hydroxyproline mark. Residue lysine 71 is modified to 5-hydroxylysine. A 4-hydroxyproline mark is found at proline 77 and proline 80. Lysine 86 and lysine 92 each carry 5-hydroxylysine. Residues proline 95 and proline 98 each carry the 4-hydroxyproline modification. Lysine 104 carries the 5-hydroxylysine modification. The 137-residue stretch at 111–247 folds into the C1q domain; the sequence is KATQKIAFSA…GFMLFPDTEA (137 aa). A disulfide bridge connects residues cysteine 175 and cysteine 192. Aspartate 193, tyrosine 194, and glutamine 200 together coordinate Ca(2+).

As to quaternary structure, core component of the complement C1 complex, a calcium-dependent complex composed of 1 molecule of the C1Q subcomplex, 2 molecules of C1R and 2 molecules of C1S. The C1Q subcomplex is composed 18 subunits: 3 chains of C1QA, C1QB, and C1QC trimerize to form 6 collagen-like triple helices connected to six globular ligand-recognition modules (C1q domain). Hydroxylated on lysine and proline residues. Hydroxylated lysine residues can be glycosylated. Bovine C1Q contains up to 66.3 hydroxylysine-galactosylglucose residues. Total percentage hydroxylysine residues glycosylated is 92.0%. Contains no hydroxylysine-monosaccharides.

Its subcellular location is the secreted. It localises to the cell surface. Its activity is regulated as follows. The C1Q subcomplex is inhibited by sulfated molecules, such as triterpenoid sulfates, heparan sulfate, or chondroitin sulfates. Core component of the complement C1 complex, a multiprotein complex that initiates the classical pathway of the complement system, a cascade of proteins that leads to phagocytosis and breakdown of pathogens and signaling that strengthens the adaptive immune system. The classical complement pathway is initiated by the C1Q subcomplex of the C1 complex, which specifically binds IgG or IgM immunoglobulins complexed with antigens, forming antigen-antibody complexes on the surface of pathogens: C1QA, together with C1QB and C1QC, specifically recognizes and binds the Fc regions of IgG or IgM via its C1q domain. Immunoglobulin-binding activates the proenzyme C1R, which cleaves C1S, initiating the proteolytic cascade of the complement system. The C1Q subcomplex is activated by a hexamer of IgG complexed with antigens, while it is activated by a pentameric IgM. The C1Q subcomplex also recognizes and binds phosphatidylserine exposed on the surface of cells undergoing programmed cell death, possibly promoting activation of the complement system. This Bos taurus (Bovine) protein is Complement C1q subcomponent subunit B (C1QB).